We begin with the raw amino-acid sequence, 252 residues long: Large ribosomal subunit protein uL30 (252 aa).

This sequence belongs to the universal ribosomal protein uL30 family.

In terms of biological role, binds to G-rich structures in 28S rRNA and in mRNAs. Plays a regulatory role in the translation apparatus; inhibits cell-free translation of mRNAs. The polypeptide is Large ribosomal subunit protein uL30 (RpL7) (Drosophila melanogaster (Fruit fly)).